Reading from the N-terminus, the 477-residue chain is Glycogen synthase (477 aa).

Lys-15 contacts ADP-alpha-D-glucose.

Belongs to the glycosyltransferase 1 family. Bacterial/plant glycogen synthase subfamily.

It carries out the reaction [(1-&gt;4)-alpha-D-glucosyl](n) + ADP-alpha-D-glucose = [(1-&gt;4)-alpha-D-glucosyl](n+1) + ADP + H(+). It functions in the pathway glycan biosynthesis; glycogen biosynthesis. Synthesizes alpha-1,4-glucan chains using ADP-glucose. This chain is Glycogen synthase, found in Anaeromyxobacter dehalogenans (strain 2CP-1 / ATCC BAA-258).